The primary structure comprises 242 residues: Biosynthetic peptidoglycan transglycosylase (242 aa).

The chain crosses the membrane as a helical span at residues 15 to 35 (FLLLLMVVLAVFWGGGIALFS).

Belongs to the glycosyltransferase 51 family.

It localises to the cell inner membrane. The enzyme catalyses [GlcNAc-(1-&gt;4)-Mur2Ac(oyl-L-Ala-gamma-D-Glu-L-Lys-D-Ala-D-Ala)](n)-di-trans,octa-cis-undecaprenyl diphosphate + beta-D-GlcNAc-(1-&gt;4)-Mur2Ac(oyl-L-Ala-gamma-D-Glu-L-Lys-D-Ala-D-Ala)-di-trans,octa-cis-undecaprenyl diphosphate = [GlcNAc-(1-&gt;4)-Mur2Ac(oyl-L-Ala-gamma-D-Glu-L-Lys-D-Ala-D-Ala)](n+1)-di-trans,octa-cis-undecaprenyl diphosphate + di-trans,octa-cis-undecaprenyl diphosphate + H(+). It functions in the pathway cell wall biogenesis; peptidoglycan biosynthesis. In terms of biological role, peptidoglycan polymerase that catalyzes glycan chain elongation from lipid-linked precursors. The chain is Biosynthetic peptidoglycan transglycosylase from Shigella sonnei (strain Ss046).